A 346-amino-acid polypeptide reads, in one-letter code: fMet-Leu-Phe receptor (346 aa).

N-linked (GlcNAc...) asparagine glycans are attached at residues N1 and N7. The Extracellular portion of the chain corresponds to 1–24 (NSSLPTNISGGTPAVSAGYLFLDI). The helical transmembrane segment at 25-47 (ITYLVFAVTFVLGVLGNGLVIWV) threads the bilayer. At 48–58 (AGFRMRHTVTT) the chain is on the cytoplasmic side. The chain crosses the membrane as a helical span at residues 59–80 (ISYLNLAVADFCFTSTLPFLMV). Residues 81-97 (VKVMRGHWPFGWFLCKF) are Extracellular-facing. C95 and C173 are disulfide-bonded. The helical transmembrane segment at 98-118 (IFTIVDINLFGSVFLIALIAL) threads the bilayer. At 119–137 (DRCVCVLHPVWTQNHRTVS) the chain is on the cytoplasmic side. The helical transmembrane segment at 138 to 159 (LAKKVIIGPWVMALLLTLPVII) threads the bilayer. Residues 160–202 (RVTTVPGKTGTVACTFDFSPWTNDPVEKLKVTIAMLTVRGIIR) are Extracellular-facing. Residues 203 to 223 (FIIGFSVPMSIVAVSYGLIAT) traverse the membrane as a helical segment. Residues 224–239 (KIHKQGLIKSSRPLRV) are Cytoplasmic-facing. Residues 240 to 263 (LSFVVAAFFLCWSPYQVVAFIATV) traverse the membrane as a helical segment. Topologically, residues 264-282 (RLRNILQGLSKELRIAVDA) are extracellular. Residues 283 to 302 (TSALAFFNSCLNPMLYVFMG) form a helical membrane-spanning segment. The Cytoplasmic portion of the chain corresponds to 303–346 (QDFRERLIHSLPTSLERALTEDSAQTSDTATNSTLPSAEVPLQA). Positions 321–346 (LTEDSAQTSDTATNSTLPSAEVPLQA) are disordered. Over residues 324 to 338 (DSAQTSDTATNSTLP) the composition is skewed to polar residues.

Belongs to the G-protein coupled receptor 1 family. In terms of processing, phosphorylated; which is necessary for desensitization.

The protein resides in the cell membrane. Its function is as follows. High affinity receptor for N-formyl-methionyl peptides (fMLP), which are powerful neutrophil chemotactic factors. Binding of fMLP to the receptor stimulates intracellular calcium mobilization and superoxide anion release. This response is mediated via a G-protein that activates a phosphatidylinositol-calcium second messenger system. Receptor for TAFA4, mediates its effects on chemoattracting macrophages, promoting phagocytosis and increasing ROS release. Receptor for cathepsin CTSG, leading to increased phagocyte chemotaxis. The polypeptide is fMet-Leu-Phe receptor (FPR1) (Macaca mulatta (Rhesus macaque)).